A 1349-amino-acid chain; its full sequence is DNA-directed RNA polymerase subunit beta' (1349 aa).

Residues Cys219, Cys293, Cys300, and Cys303 each coordinate Zn(2+). Residues 1298 to 1349 (LDSPTLGESGFGSRRAERSVLDDEDELIADEVVDDDDFEEEEEDDEDDFDDE) are disordered. Residues 1319–1349 (DDEDELIADEVVDDDDFEEEEEDDEDDFDDE) show a composition bias toward acidic residues.

Belongs to the RNA polymerase beta' chain family. RpoC2 subfamily. In cyanobacteria the RNAP catalytic core is composed of 2 alpha, 1 beta, 1 beta', 1 gamma and 1 omega subunit. When a sigma factor is associated with the core the holoenzyme is formed, which can initiate transcription. Zn(2+) is required as a cofactor.

It carries out the reaction RNA(n) + a ribonucleoside 5'-triphosphate = RNA(n+1) + diphosphate. Its function is as follows. DNA-dependent RNA polymerase catalyzes the transcription of DNA into RNA using the four ribonucleoside triphosphates as substrates. The protein is DNA-directed RNA polymerase subunit beta' of Nostoc punctiforme (strain ATCC 29133 / PCC 73102).